We begin with the raw amino-acid sequence, 346 residues long: Nitrilase 1 (346 aa).

S2 carries the post-translational modification N-acetylserine. One can recognise a CN hydrolase domain in the interval 25 to 297; the sequence is VRVTIVQSST…EGLVTADIDL (273 aa). E65 (proton acceptor) is an active-site residue. The Proton donor role is filled by K152. The Nucleophile role is filled by C186.

It belongs to the carbon-nitrogen hydrolase superfamily. Nitrilase family. Interacts with DEK3. Expressed in cotyledons, hypocotyls, leaves, roots, stems, flowers and siliques.

It carries out the reaction a nitrile + 2 H2O = a carboxylate + NH4(+). Can convert indole-3-acetonitrile to the plant hormone indole-3-acetic acid. The protein is Nitrilase 1 of Arabidopsis thaliana (Mouse-ear cress).